We begin with the raw amino-acid sequence, 224 residues long: Uracil phosphoribosyltransferase (224 aa).

Residue Arg-92 participates in 5-phospho-alpha-D-ribose 1-diphosphate binding. Residue Lys-109 coordinates GTP. 5-phospho-alpha-D-ribose 1-diphosphate-binding positions include Arg-117 and Asp-145–Thr-153. Residues Ile-210 and Gly-215–Ala-217 each bind uracil. Asp-216 contributes to the 5-phospho-alpha-D-ribose 1-diphosphate binding site.

This sequence belongs to the UPRTase family. Mg(2+) is required as a cofactor.

The enzyme catalyses UMP + diphosphate = 5-phospho-alpha-D-ribose 1-diphosphate + uracil. Its pathway is pyrimidine metabolism; UMP biosynthesis via salvage pathway; UMP from uracil: step 1/1. Allosterically activated by GTP. Catalyzes the conversion of uracil and 5-phospho-alpha-D-ribose 1-diphosphate (PRPP) to UMP and diphosphate. The chain is Uracil phosphoribosyltransferase (UPP) from Nicotiana tabacum (Common tobacco).